The chain runs to 396 residues: Elongation factor Tu (396 aa).

The region spanning 10–205 (KPHVNIGTIG…AVDESIPDPV (196 aa)) is the tr-type G domain. The G1 stretch occupies residues 19 to 26 (GHVDHGKT). Position 19 to 26 (19 to 26 (GHVDHGKT)) interacts with GTP. Thr26 contributes to the Mg(2+) binding site. The tract at residues 62 to 66 (GITIN) is G2. The G3 stretch occupies residues 83–86 (DAPG). Residues 83-87 (DAPGH) and 138-141 (NKAD) contribute to the GTP site. The tract at residues 138–141 (NKAD) is G4. The interval 175-177 (SAL) is G5.

Belongs to the TRAFAC class translation factor GTPase superfamily. Classic translation factor GTPase family. EF-Tu/EF-1A subfamily. In terms of assembly, monomer.

It is found in the cytoplasm. It catalyses the reaction GTP + H2O = GDP + phosphate + H(+). GTP hydrolase that promotes the GTP-dependent binding of aminoacyl-tRNA to the A-site of ribosomes during protein biosynthesis. The protein is Elongation factor Tu of Mycobacterium bovis (strain ATCC BAA-935 / AF2122/97).